The primary structure comprises 1564 residues: NACHT domain- and WD repeat-containing protein 1 (1564 aa).

Residues 335–661 (TPLVLFGPPG…LLAIAHRQLV (327 aa)) form the NACHT domain. Residue 341–348 (GPPGIGKT) participates in ATP binding. 14 WD repeats span residues 866–905 (GCHK…VIHM), 908–947 (GHTG…EKFT), 956–994 (PAEP…PVFH), 998–1037 (DASD…LQGK), 1044–1082 (KEET…LLEK), 1083–1121 (LPDA…RRFM), 1126–1165 (EHED…TLLD), 1167–1207 (LEGV…RSRV), 1212–1251 (LDRT…EQDS), 1253–1290 (DTSS…RQDV), 1291–1327 (ICIP…VLDI), 1338–1376 (GPRY…LYEC), 1380–1418 (KAFP…WDLQ), and 1425–1462 (EMSY…VWSV).

In terms of assembly, may interact with HSP90AA1, HSP90AB1 and BAG2. Expressed at highest levels in prostate, followed by testis, retina, trachea and optic nerve. Also detected in brain, epididymis, lung, vagina and pituitary. In the prostate, tends to be up-regulated during malignant progression compared to normal epithelium (at protein level).

The protein resides in the cytoplasm. Its subcellular location is the cytosol. In terms of biological role, may play a role in the control of androgen receptor (AR) protein steady-state levels. This is NACHT domain- and WD repeat-containing protein 1 (NWD1) from Homo sapiens (Human).